We begin with the raw amino-acid sequence, 154 residues long: Ribonuclease 8 (154 aa).

The signal sequence occupies residues Met1–Ala27. His42 functions as the Proton acceptor in the catalytic mechanism. 3 disulfides stabilise this stretch: Cys64-Cys118, Cys82-Cys133, and Cys89-Cys96. Substrate is bound by residues Lys65–Thr69 and Lys90. His149 functions as the Proton donor in the catalytic mechanism.

Belongs to the pancreatic ribonuclease family.

It is found in the secreted. In terms of biological role, has a low ribonuclease activity. The sequence is that of Ribonuclease 8 (RNASE8) from Pongo pygmaeus (Bornean orangutan).